The chain runs to 412 residues: Tyrosine--tRNA ligase (412 aa).

Tyr41 provides a ligand contact to L-tyrosine. The short motif at Ala46–His55 is the 'HIGH' region element. 2 residues coordinate L-tyrosine: Tyr174 and Gln178. The 'KMSKS' region motif lies at Lys234–Ser238. Residue Lys237 participates in ATP binding. Residues Leu348 to Glu411 enclose the S4 RNA-binding domain.

The protein belongs to the class-I aminoacyl-tRNA synthetase family. TyrS type 1 subfamily. Homodimer.

It is found in the cytoplasm. The enzyme catalyses tRNA(Tyr) + L-tyrosine + ATP = L-tyrosyl-tRNA(Tyr) + AMP + diphosphate + H(+). Catalyzes the attachment of tyrosine to tRNA(Tyr) in a two-step reaction: tyrosine is first activated by ATP to form Tyr-AMP and then transferred to the acceptor end of tRNA(Tyr). This chain is Tyrosine--tRNA ligase, found in Pseudomonas aeruginosa (strain LESB58).